Reading from the N-terminus, the 84-residue chain is Conophysin-R (84 aa).

Disulfide bonds link C6/C46, C9/C20, C14/C36, C21/C26, C53/C71, C65/C83, and C72/C77.

In terms of tissue distribution, expressed by the venom duct.

It localises to the secreted. In terms of biological role, targets vasopressin-oxytocin related receptors. No effect observed when injected into goldfish or into mice. This chain is Conophysin-R, found in Conus radiatus (Rayed cone).